A 1510-amino-acid polypeptide reads, in one-letter code: ABC transporter C family MRP4 (1510 aa).

A run of 12 helical transmembrane segments spans residues 12–32, 55–75, 78–98, 109–129, 138–158, 177–197, 319–339, 342–362, 373–393, 427–447, 453–473, and 540–560; these read EAVAATAHAALLALAALLLLL, PAVVVGDGAGGALAAATAGAW, AVLASCAYALLSQVAVLSYEV, ALLLPAVQAVSWAALLALALQ, FPALVRLWWVVSFALCVVIAY, MVANFASVPALGFLCLVGVMG, TFAAVNTIVSYVGPYLISYFV, LSGNIAFPHEGYILASIFFVA, WYLGVDIMGIHVKSGLTAMVY, AWYFHDIWMLPLQIILALAIL, IAMVSTLVATVLSIAASVPVA, and FVFWSSPIFVAVITFGTCILL. One can recognise an ABC transmembrane type-1 1 domain in the interval 320-595; it reads FAAVNTIVSY…FPDLISMMAQ (276 aa). Residues 629-852 form the ABC transporter 1 domain; the sequence is VDIKDGAFSW…GTDFNALVSA (224 aa). 664–671 lines the ATP pocket; it reads GVIGSGKS. The interval 889–925 is disordered; sequence LKNKMCENGQPSNTRGIKEKKKKEERKKKRTVQEEER. Basic residues predominate over residues 906–918; the sequence is KEKKKKEERKKKR. The next 6 membrane-spanning stretches (helical) occupy residues 945–965, 985–1005, 1060–1082, 1086–1108, 1154–1174, and 1179–1199; these read GTLIPLIILAQTMFQVLQIAS, SVVLLVVYMSLAFGSSLFVFM, IAFRLGGFASTTIQLLGIVAVMS, WQVLILIVPMAVACMWMQRYYIA, LLDCFARPLFSSLAAIEWLCL, and LSTFVFAFCMAILVSFPPGTI. The ABC transmembrane type-1 2 domain occupies 950–1220; that stretch reads LIILAQTMFQ…GLNLNARMSR (271 aa). An ABC transporter 2 domain is found at 1267-1501; it reads IELIDLKVRY…KSSMFIQLVS (235 aa). Residue 1301-1308 coordinates ATP; it reads GRTGSGKS.

Belongs to the ABC transporter superfamily. ABCC family. Conjugate transporter (TC 3.A.1.208) subfamily. Expressed in roots, leaves, stalks, tassels, silks, developing seeds and developing embryos.

Its subcellular location is the membrane. ABC transporter that may affect phytic acid transport and compartmentalization. May function directly or indirectly in removing phytic acid from the cytosol or in vesicle trafficking. Required for phytic acid accumulation in developing seeds. Phytic acid is the primary storage form of phosphorus in cereal grains and other plant seeds. This is ABC transporter C family MRP4 from Zea mays (Maize).